The primary structure comprises 160 residues: Eosinophil cationic protein (160 aa).

The N-terminal stretch at 1–27 is a signal peptide; sequence MVPKLFTSQICLLLLLGLMGVEGSLHA. The segment at 28–72 is required for nearly all of the bactericidal activities; partially involved in LPS-binding; sequence RPPQFTKAQWFAIQHINVNPPRCTIAMRVINNYQRRCKNQNTFLR. Residue H42 is the Proton acceptor of the active site. Intrachain disulfides connect C50–C110, C64–C123, C82–C138, and C89–C98. Y60 carries the post-translational modification 3'-nitrotyrosine. 65-69 contributes to the substrate binding site; that stretch reads KNQNT. N-linked (GlcNAc...) asparagine glycosylation is found at N92 and N119. H155 serves as the catalytic Proton donor.

The protein belongs to the pancreatic ribonuclease family. In terms of assembly, interacts with bacterial lipopolysaccharide (LPS) and lipoteichoic acid (LTA). In vitro interacts with phospholipid bilayers.

It is found in the secreted. Its function is as follows. Cytotoxin and helminthotoxin with low-efficiency ribonuclease activity. Possesses a wide variety of biological activities. Exhibits antibacterial activity. The polypeptide is Eosinophil cationic protein (RNASE3) (Macaca fascicularis (Crab-eating macaque)).